A 426-amino-acid chain; its full sequence is Serine hydroxymethyltransferase (426 aa).

(6S)-5,6,7,8-tetrahydrofolate contacts are provided by residues L118 and 122-124 (GHL). K227 carries the N6-(pyridoxal phosphate)lysine modification. The segment at 342–368 (NTIPNDPKPPTQASGIRLGTPAMTTRG) is disordered.

The protein belongs to the SHMT family. As to quaternary structure, homodimer. Pyridoxal 5'-phosphate serves as cofactor.

It localises to the cytoplasm. The enzyme catalyses (6R)-5,10-methylene-5,6,7,8-tetrahydrofolate + glycine + H2O = (6S)-5,6,7,8-tetrahydrofolate + L-serine. The protein operates within one-carbon metabolism; tetrahydrofolate interconversion. Its pathway is amino-acid biosynthesis; glycine biosynthesis; glycine from L-serine: step 1/1. Functionally, catalyzes the reversible interconversion of serine and glycine with tetrahydrofolate (THF) serving as the one-carbon carrier. This reaction serves as the major source of one-carbon groups required for the biosynthesis of purines, thymidylate, methionine, and other important biomolecules. Also exhibits THF-independent aldolase activity toward beta-hydroxyamino acids, producing glycine and aldehydes, via a retro-aldol mechanism. In Thermomicrobium roseum (strain ATCC 27502 / DSM 5159 / P-2), this protein is Serine hydroxymethyltransferase.